Here is a 306-residue protein sequence, read N- to C-terminus: Low density lipoprotein receptor adapter protein 1 (306 aa).

Met-1 is modified (N-acetylmethionine). A Phosphoserine modification is found at Ser-14. Residues 44-168 (GMVFSLKYLG…VAQAFKVAFE (125 aa)) form the PID domain. The interval 178 to 204 (EKREKANQEGGDVPGTRRDSTPSLKTS) is disordered. Ser-197 and Ser-200 each carry phosphoserine. A Clathrin box motif is present at residues 210 to 214 (LLDLE). Positions 247-274 (WELDDGLDEAFSRLAQSRTNPQVLDTGL) are AP-2 complex binding. The [DE]-X(1,2)-F-X-X-[FL]-X-X-X-R motif motif lies at 255–264 (EAFSRLAQSR).

In terms of assembly, interacts (via PID domain) with LDLR (via NPXY motifs). Binds to soluble clathrin trimers. Interacts with AP2B1; the interaction mediates the association with the AP-2 complex. Interacts with VLDLR. Interacts with LRP2.

It localises to the cytoplasm. Functionally, adapter protein (clathrin-associated sorting protein (CLASP)) required for efficient endocytosis of the LDL receptor (LDLR) in polarized cells such as hepatocytes and lymphocytes, but not in non-polarized cells (fibroblasts). May be required for LDL binding and internalization but not for receptor clustering in coated pits. May facilitate the endocytosis of LDLR and LDLR-LDL complexes from coated pits by stabilizing the interaction between the receptor and the structural components of the pits. May also be involved in the internalization of other LDLR family members. Binds to phosphoinositides, which regulate clathrin bud assembly at the cell surface. Required for trafficking of LRP2 to the endocytic recycling compartment which is necessary for LRP2 proteolysis, releasing a tail fragment which translocates to the nucleus and mediates transcriptional repression. This is Low density lipoprotein receptor adapter protein 1 from Rattus norvegicus (Rat).